Consider the following 67-residue polypeptide: Small ribosomal subunit protein bS21 (67 aa).

The protein belongs to the bacterial ribosomal protein bS21 family.

The polypeptide is Small ribosomal subunit protein bS21 (Paramagnetospirillum magneticum (strain ATCC 700264 / AMB-1) (Magnetospirillum magneticum)).